Reading from the N-terminus, the 862-residue chain is S-layer protein EA1 (862 aa).

An N-terminal signal peptide occupies residues 1-29 (MAKTNSYKKVIAGTMTAAMVAGIVSPVAA). SLH domains are found at residues 30-93 (AGKS…NAQP), 94-151 (SFKD…KVNG), and 152-214 (ELVT…DNAQ).

Its subcellular location is the secreted. The protein resides in the cell wall. It localises to the S-layer. The S-layer is a paracrystalline mono-layered assembly of proteins which coat the surface of bacteria. The chain is S-layer protein EA1 (eag) from Bacillus anthracis.